Consider the following 437-residue polypeptide: Phosphomethylpyrimidine synthase (437 aa).

Residues N69, M98, Y127, H163, 185–187, 226–229, and E265 each bind substrate; these read SRG and DACR. Residue H269 coordinates Zn(2+). Residue Y292 coordinates substrate. Position 333 (H333) interacts with Zn(2+). [4Fe-4S] cluster contacts are provided by C409, C412, and C416.

Belongs to the ThiC family. [4Fe-4S] cluster is required as a cofactor.

The enzyme catalyses 5-amino-1-(5-phospho-beta-D-ribosyl)imidazole + S-adenosyl-L-methionine = 4-amino-2-methyl-5-(phosphooxymethyl)pyrimidine + CO + 5'-deoxyadenosine + formate + L-methionine + 3 H(+). Its pathway is cofactor biosynthesis; thiamine diphosphate biosynthesis. Functionally, catalyzes the synthesis of the hydroxymethylpyrimidine phosphate (HMP-P) moiety of thiamine from aminoimidazole ribotide (AIR) in a radical S-adenosyl-L-methionine (SAM)-dependent reaction. The chain is Phosphomethylpyrimidine synthase from Clostridium botulinum (strain Okra / Type B1).